The following is a 626-amino-acid chain: Janus kinase and microtubule-interacting protein 1 (626 aa).

The segment at 1–25 (MSKKGRSKGEKPETETDSVQMANEE) is disordered. A mediates association with microtubules region spans residues 1–365 (MSKKGRSKGE…KLKSLTRENV (365 aa)). Coiled coils occupy residues 13–255 (ETET…EAER) and 284–413 (ERDV…DDLS). Positions 365–626 (VEMKEKLSAQ…ILFEPKLKFV (262 aa)) are mediates interaction with TYK2 and GABBR1. S382 is modified (phosphoserine). Residues 452–461 (ETLSETSYNT) are compositionally biased toward polar residues. The disordered stretch occupies residues 452 to 481 (ETLSETSYNTDRTDRTPATPEEDLDETTTR). The residue at position 470 (T470) is a Phosphothreonine. The stretch at 490-604 (QLTREYQALQ…EFRVLELEVR (115 aa)) forms a coiled coil.

The protein belongs to the JAKMIP family. In terms of assembly, homodimer. Interacts with JAK1 and TYK2. Forms a complex with GABBR1 and KIF5B/kinesin-1. Post-translationally, phosphorylated. In terms of tissue distribution, specifically expressed in brain and testis by spermatogonia, spermatocytes, spermatozoa and Sertoli cells (at protein level).

It is found in the cytoplasm. It localises to the cytoskeleton. Its subcellular location is the membrane. Associates with microtubules and may play a role in the microtubule-dependent transport of the GABA-B receptor. May play a role in JAK1 signaling and regulate microtubule cytoskeleton rearrangements. This chain is Janus kinase and microtubule-interacting protein 1 (Jakmip1), found in Rattus norvegicus (Rat).